Consider the following 415-residue polypeptide: Dynein assembly factor with WD repeat domains 1 (415 aa).

8 WD repeats span residues 90–129 (AHILPLTNVALNKAGSCFITGSYDRTCKVWDTASGEELHT), 132–174 (GHRN…HTFR), 175–214 (GHTAEIVCLSFNPQSTVVATGSMDTTAKLWDIQSGEEVVT), 217–256 (GHLAEIISLSFDTSGDRIITGSFDHTVVVWDASTGRKVHT), 259–298 (GHCAEISSALFSWDCSLILTGSMDKTCMLWDATSGKCVAT), 301–340 (GHDDEILDSCFDYTGKLIATASADGTARVYNATTRKCITK), 343–384 (GHEG…QVLE), and 386–415 (HTDEIFSCAFNYKGNIVITGSKDNSCRIWR).

This sequence belongs to the WD repeat WDR69 family. Interacts with IFT46.

The protein localises to the cytoplasm. The protein resides in the cytoskeleton. It is found in the flagellum basal body. It localises to the flagellum axoneme. Its function is as follows. Required for axonemal dynein assembly and ciliary motility in ciliated organs, including Kupffer's vesicle, during embryogenesis. Facilitates the onset of robust cilia motility during development. The chain is Dynein assembly factor with WD repeat domains 1 (Daw1) from Rattus norvegicus (Rat).